The chain runs to 558 residues: Phosphatase and actin regulator 3 (558 aa).

Residues 1-11 (MAASEDGSSCL) are compositionally biased toward polar residues. Disordered regions lie at residues 1-69 (MAAS…KLAT), 81-288 (KKKN…RPLP), and 300-366 (LATK…ENLM). Low complexity predominate over residues 18 to 33 (QSDPSFLSDSSATSTD). Thr-69 carries the phosphothreonine modification. Residues 92–117 (SALEKKMAGRQGREELIKQGLLEMME) form an RPEL 1 repeat. Positions 94–108 (LEKKMAGRQGREELI) are enriched in basic and acidic residues. Residues 144–169 (ETLTSEGAQPGSPSASGTDQVSQDEL) show a composition bias toward polar residues. Residues 228–239 (PSPPLLPTPPPK) show a composition bias toward pro residues. Phosphoserine is present on Ser-229. Position 235 is a phosphothreonine (Thr-235). 2 stretches are compositionally biased toward basic and acidic residues: residues 300–341 (LATK…RDEA) and 354–363 (ATKDSEENKE). 3 RPEL repeats span residues 400-425 (ELLA…PRRT), 438-463 (MKLS…KQRN), and 476-501 (QRLT…IRFS). A coiled-coil region spans residues 449–485 (AVEELERRNILKQRNDQTEQEERREIKQRLTRKLNQR).

It belongs to the phosphatase and actin regulator family. As to quaternary structure, binds PPP1CA and actin; thus inhibiting the protein phosphatase 1 (PP1) activity.

The protein localises to the nucleus matrix. The chain is Phosphatase and actin regulator 3 (Phactr3) from Mus musculus (Mouse).